The chain runs to 647 residues: Chaperone protein DnaK (647 aa).

Thr-200 carries the post-translational modification Phosphothreonine; by autocatalysis. Residues 611 to 631 (AGEQGAAGAAGAGAQQQAQPQ) show a composition bias toward low complexity. The tract at residues 611–647 (AGEQGAAGAAGAGAQQQAQPQDDNVVDAEFKEVNDKK) is disordered. The segment covering 638 to 647 (AEFKEVNDKK) has biased composition (basic and acidic residues).

It belongs to the heat shock protein 70 family.

Functionally, acts as a chaperone. In Cupriavidus taiwanensis (strain DSM 17343 / BCRC 17206 / CCUG 44338 / CIP 107171 / LMG 19424 / R1) (Ralstonia taiwanensis (strain LMG 19424)), this protein is Chaperone protein DnaK.